We begin with the raw amino-acid sequence, 305 residues long: tRNA uridine(34) hydroxylase (305 aa).

The region spanning 126-220 is the Rhodanese domain; the sequence is SDPEVIVIDT…YLEQIPPEES (95 aa). C180 serves as the catalytic Cysteine persulfide intermediate.

It belongs to the TrhO family.

The catalysed reaction is uridine(34) in tRNA + AH2 + O2 = 5-hydroxyuridine(34) in tRNA + A + H2O. In terms of biological role, catalyzes oxygen-dependent 5-hydroxyuridine (ho5U) modification at position 34 in tRNAs. This chain is tRNA uridine(34) hydroxylase, found in Trichormus variabilis (strain ATCC 29413 / PCC 7937) (Anabaena variabilis).